A 167-amino-acid chain; its full sequence is MRSRSFLVLVVVFLICGTLVAQAAGRIRRPKGKGTKKILALVKGQGPVRGKDQVKGQGPVKGQDLGKSQDPVKAQLPDKGQDLGKGEDSVKGQDPFKAQLPDKLQDPVKAQPAIKRLILLTKPGSCPRILIRCLMVNPPNRCLSDAQCPGLKKCCEGFCGKACMDPK.

Residues M1–A21 form the signal peptide. Positions Q22–D70 are excised as a propeptide. Tandem repeats lie at residues G44–R49, G50–K55, G56–K61, G62–K67, S68–K73, A74–K79, G80–K85, G86–K91, G92–K97, A98–K103, L104–K109, and A110–K115. Residues G44–K115 form a 12 X 6 AA tandem repeats of [GSAL]-[QEK]-[DGLP]-[APSLQ]-[VGDFI]-[KR] region. Positions G46–L104 are disordered. Residues D78–C126 are 2 X tandem repeats of SVP-1 like motif. Positions K79 to K91 are enriched in basic and acidic residues. 2 SVP-1 clotting repeats span residues G80–P101 and L104–C126. Residues L119–K167 enclose the WAP domain. Disulfide bonds link C126/C155, C133/C159, C142/C154, and C148/C163.

Trachea and large intestine.

Its function is as follows. Neutrophil and pancreatic elastase-specific inhibitor of skin. It may prevent elastase-mediated tissue proteolysis. This Sus scrofa (Pig) protein is Elafin.